We begin with the raw amino-acid sequence, 451 residues long: uncharacterized protein (451 aa).

It to ORF5 in pFZ1.

This is an uncharacterized protein from Methanothermobacter thermautotrophicus (Methanobacterium thermoformicicum).